Here is a 139-residue protein sequence, read N- to C-terminus: Deoxyuridine 5'-triphosphate nucleotidohydrolase (139 aa).

Substrate contacts are provided by residues 58-60 (RSG), N71, 75-77 (LID), and M85.

It belongs to the dUTPase family. Mg(2+) serves as cofactor.

It carries out the reaction dUTP + H2O = dUMP + diphosphate + H(+). Its pathway is pyrimidine metabolism; dUMP biosynthesis; dUMP from dCTP (dUTP route): step 2/2. This enzyme is involved in nucleotide metabolism: it produces dUMP, the immediate precursor of thymidine nucleotides and it decreases the intracellular concentration of dUTP so that uracil cannot be incorporated into DNA. The sequence is that of Deoxyuridine 5'-triphosphate nucleotidohydrolase from Gamma-proteobacterium EBAC31A08.